A 429-amino-acid polypeptide reads, in one-letter code: Arginine biosynthesis bifunctional protein ArgJ (429 aa).

Positions 181, 207, 218, 302, 424, and 429 each coordinate substrate. Residue Thr218 is the Nucleophile of the active site.

This sequence belongs to the ArgJ family. Heterotetramer of two alpha and two beta chains.

It localises to the cytoplasm. The enzyme catalyses N(2)-acetyl-L-ornithine + L-glutamate = N-acetyl-L-glutamate + L-ornithine. It carries out the reaction L-glutamate + acetyl-CoA = N-acetyl-L-glutamate + CoA + H(+). It participates in amino-acid biosynthesis; L-arginine biosynthesis; L-ornithine and N-acetyl-L-glutamate from L-glutamate and N(2)-acetyl-L-ornithine (cyclic): step 1/1. It functions in the pathway amino-acid biosynthesis; L-arginine biosynthesis; N(2)-acetyl-L-ornithine from L-glutamate: step 1/4. Its function is as follows. Catalyzes two activities which are involved in the cyclic version of arginine biosynthesis: the synthesis of N-acetylglutamate from glutamate and acetyl-CoA as the acetyl donor, and of ornithine by transacetylation between N(2)-acetylornithine and glutamate. This Chlorobium chlorochromatii (strain CaD3) protein is Arginine biosynthesis bifunctional protein ArgJ.